The following is a 511-amino-acid chain: ATP synthase subunit alpha, plastid (511 aa).

An ATP-binding site is contributed by 170 to 177 (GDRQTGKT).

This sequence belongs to the ATPase alpha/beta chains family. In terms of assembly, F-type ATPases have 2 components, CF(1) - the catalytic core - and CF(0) - the membrane proton channel. CF(1) has five subunits: alpha(3), beta(3), gamma(1), delta(1), epsilon(1). CF(0) has four main subunits: a, b, b' and c.

It localises to the plastid membrane. The catalysed reaction is ATP + H2O + 4 H(+)(in) = ADP + phosphate + 5 H(+)(out). Its function is as follows. Produces ATP from ADP in the presence of a proton gradient across the membrane. The alpha chain is a regulatory subunit. The sequence is that of ATP synthase subunit alpha, plastid from Cuscuta reflexa (Southern Asian dodder).